The primary structure comprises 249 residues: Carbohydrate deacetylase (249 aa).

2 residues coordinate Mg(2+): His-60 and His-125.

Belongs to the YdjC deacetylase family. Homodimer. Mg(2+) serves as cofactor.

In terms of biological role, probably catalyzes the deacetylation of acetylated carbohydrates an important step in the degradation of oligosaccharides. The chain is Carbohydrate deacetylase from Thermoanaerobacter pseudethanolicus (strain ATCC 33223 / 39E) (Clostridium thermohydrosulfuricum).